Consider the following 463-residue polypeptide: Bifunctional protein HldE (463 aa).

The segment at methionine 1–aspartate 313 is ribokinase. Residue aspartate 258 is part of the active site. The segment at alanine 331–arginine 463 is cytidylyltransferase.

It in the N-terminal section; belongs to the carbohydrate kinase PfkB family. In the C-terminal section; belongs to the cytidylyltransferase family. As to quaternary structure, homodimer.

It catalyses the reaction D-glycero-beta-D-manno-heptose 7-phosphate + ATP = D-glycero-beta-D-manno-heptose 1,7-bisphosphate + ADP + H(+). The catalysed reaction is D-glycero-beta-D-manno-heptose 1-phosphate + ATP + H(+) = ADP-D-glycero-beta-D-manno-heptose + diphosphate. It functions in the pathway nucleotide-sugar biosynthesis; ADP-L-glycero-beta-D-manno-heptose biosynthesis; ADP-L-glycero-beta-D-manno-heptose from D-glycero-beta-D-manno-heptose 7-phosphate: step 1/4. The protein operates within nucleotide-sugar biosynthesis; ADP-L-glycero-beta-D-manno-heptose biosynthesis; ADP-L-glycero-beta-D-manno-heptose from D-glycero-beta-D-manno-heptose 7-phosphate: step 3/4. Catalyzes the phosphorylation of D-glycero-D-manno-heptose 7-phosphate at the C-1 position to selectively form D-glycero-beta-D-manno-heptose-1,7-bisphosphate. Functionally, catalyzes the ADP transfer from ATP to D-glycero-beta-D-manno-heptose 1-phosphate, yielding ADP-D-glycero-beta-D-manno-heptose. The chain is Bifunctional protein HldE from Streptomyces coelicolor (strain ATCC BAA-471 / A3(2) / M145).